We begin with the raw amino-acid sequence, 134 residues long: ATP synthase epsilon chain, chloroplastic (134 aa).

The protein belongs to the ATPase epsilon chain family. As to quaternary structure, F-type ATPases have 2 components, CF(1) - the catalytic core - and CF(0) - the membrane proton channel. CF(1) has five subunits: alpha(3), beta(3), gamma(1), delta(1), epsilon(1). CF(0) has three main subunits: a, b and c.

Its subcellular location is the plastid. The protein localises to the chloroplast thylakoid membrane. Produces ATP from ADP in the presence of a proton gradient across the membrane. This is ATP synthase epsilon chain, chloroplastic from Chlorella vulgaris (Green alga).